The sequence spans 517 residues: Tyrosine-protein kinase Fgr (517 aa).

The N-myristoyl glycine moiety is linked to residue Gly2. 2 S-palmitoyl cysteine lipidation sites follow: Cys3 and Cys6. A compositionally biased stretch (basic and acidic residues) spans 17-33; it reads VGLEGDFRSQGAEERYY. Positions 17-46 are disordered; it reads VGLEGDFRSQGAEERYYPDPTQGRSSSISP. Tyr32 carries the phosphotyrosine modification. Position 50 is a phosphoserine (Ser50). Positions 65–126 constitute an SH3 domain; it reads TGVTIFVALY…PSNYVAPVDS (62 aa). In terms of domain architecture, SH2 spans 132-229; sequence WYFGKISRKD…GLCYLLTAPC (98 aa). Tyr196 carries the post-translational modification Phosphotyrosine. The residue at position 206 (Ser206) is a Phosphoserine. In terms of domain architecture, Protein kinase spans 251-504; sequence IALDRRLGTG…YLQSFLEDYF (254 aa). Residues 257–265 and Lys279 each bind ATP; that span reads LGTGCFGDV. Catalysis depends on Asp370, which acts as the Proton acceptor. Position 400 is a phosphotyrosine; by autocatalysis (Tyr400). Tyr511 is subject to Phosphotyrosine; by SRC.

The protein belongs to the protein kinase superfamily. Tyr protein kinase family. SRC subfamily. Interacts with ITGB1, ITGB2, MS4A2/FCER1B and FCGR2. Interacts (via SH2 domain) with SYK (tyrosine phosphorylated). Interacts (via SH2 domain) with FLT3 (tyrosine phosphorylated). Interacts with PTK2/FAK1. Interacts (via SH2 domain) with HCLS1 (tyrosine phosphorylated by SYK). Interacts with SIRPA and PTPNS1. Interacts (not phosphorylated on tyrosine residues) with CBL; FGR tyrosine phosphorylation promotes dissociation. Interacts with CLNK. Post-translationally, ubiquitinated. Becomes ubiquitinated in response to ITGB2 signaling; this does not lead to degradation. In terms of processing, phosphorylated. Autophosphorylated on tyrosine residues. Becomes phosphorylated in response to FCGR2 engagement, cell adhesion and signaling by ITGB2. Prior phosphorylation at Tyr-511 by SRC inhibits ulterior autophosphorylation at Tyr-400. Detected in brain cortex (at protein level).

It localises to the cell membrane. The protein resides in the cell projection. It is found in the ruffle membrane. Its subcellular location is the cytoplasm. The protein localises to the cytosol. It localises to the cytoskeleton. The protein resides in the mitochondrion inner membrane. It is found in the mitochondrion intermembrane space. The catalysed reaction is L-tyrosyl-[protein] + ATP = O-phospho-L-tyrosyl-[protein] + ADP + H(+). Activated by autophosphorylation. Prior phosphorylation at Tyr-511 by SRC inhibits ulterior autophosphorylation at Tyr-400. Activated by phorbol myristate acetate, phosphatidic acid and poly-Lys. Binding (via SH2 domain) of HCLS1 that is already phosphorylated by SYK strongly increases kinase activity. Its function is as follows. Non-receptor tyrosine-protein kinase that transmits signals from cell surface receptors devoid of kinase activity and contributes to the regulation of immune responses, including neutrophil, monocyte, macrophage and mast cell functions, cytoskeleton remodeling in response to extracellular stimuli, phagocytosis, cell adhesion and migration. Promotes mast cell degranulation, release of inflammatory cytokines and IgE-mediated anaphylaxis. Acts downstream of receptors that bind the Fc region of immunoglobulins, such as MS4A2/FCER1B, FCER1G and FCGR2. Acts downstream of ITGB1 and ITGB2, and regulates actin cytoskeleton reorganization, cell spreading and adhesion. Depending on the context, activates or inhibits cellular responses. Functions as a negative regulator of ITGB2 signaling, phagocytosis and SYK activity in monocytes. Required for normal ITGB1 and ITGB2 signaling, normal cell spreading and adhesion in neutrophils and macrophages. Functions as a positive regulator of cell migration and regulates cytoskeleton reorganization via RAC1 activation. Phosphorylates SYK (in vitro) and promotes SYK-dependent activation of AKT1 and MAP kinase signaling. Phosphorylates PLD2 in antigen-stimulated mast cells, leading to PLD2 activation and the production of the signaling molecules lysophosphatidic acid and diacylglycerol. Promotes activation of PIK3R1. Phosphorylates FASLG, and thereby regulates its ubiquitination and subsequent internalization. Phosphorylates ABL1. Promotes phosphorylation of CBL, CTTN, PIK3R1, PTK2/FAK1, PTK2B/PYK2 and VAV2. Phosphorylates HCLS1 that has already been phosphorylated by SYK, but not unphosphorylated HCLS1. Together with CLNK, it acts as a negative regulator of natural killer cell-activating receptors and inhibits interferon-gamma production. This chain is Tyrosine-protein kinase Fgr (Fgr), found in Rattus norvegicus (Rat).